The chain runs to 230 residues: 5'-methylthioadenosine/S-adenosylhomocysteine nucleosidase (230 aa).

The active-site Proton acceptor is Glu12. Substrate is bound by residues Gly78, Met153, and 174 to 175 (ME). Asp198 acts as the Proton donor in catalysis.

Belongs to the PNP/UDP phosphorylase family. MtnN subfamily.

The enzyme catalyses S-adenosyl-L-homocysteine + H2O = S-(5-deoxy-D-ribos-5-yl)-L-homocysteine + adenine. It carries out the reaction S-methyl-5'-thioadenosine + H2O = 5-(methylsulfanyl)-D-ribose + adenine. It catalyses the reaction 5'-deoxyadenosine + H2O = 5-deoxy-D-ribose + adenine. The protein operates within amino-acid biosynthesis; L-methionine biosynthesis via salvage pathway; S-methyl-5-thio-alpha-D-ribose 1-phosphate from S-methyl-5'-thioadenosine (hydrolase route): step 1/2. Functionally, catalyzes the irreversible cleavage of the glycosidic bond in both 5'-methylthioadenosine (MTA) and S-adenosylhomocysteine (SAH/AdoHcy) to adenine and the corresponding thioribose, 5'-methylthioribose and S-ribosylhomocysteine, respectively. Also cleaves 5'-deoxyadenosine, a toxic by-product of radical S-adenosylmethionine (SAM) enzymes, into 5-deoxyribose and adenine. This is 5'-methylthioadenosine/S-adenosylhomocysteine nucleosidase from Tolumonas auensis (strain DSM 9187 / NBRC 110442 / TA 4).